Consider the following 373-residue polypeptide: S-adenosylmethionine:tRNA ribosyltransferase-isomerase (373 aa).

It belongs to the QueA family. Monomer.

Its subcellular location is the cytoplasm. It catalyses the reaction 7-aminomethyl-7-carbaguanosine(34) in tRNA + S-adenosyl-L-methionine = epoxyqueuosine(34) in tRNA + adenine + L-methionine + 2 H(+). It participates in tRNA modification; tRNA-queuosine biosynthesis. In terms of biological role, transfers and isomerizes the ribose moiety from AdoMet to the 7-aminomethyl group of 7-deazaguanine (preQ1-tRNA) to give epoxyqueuosine (oQ-tRNA). The sequence is that of S-adenosylmethionine:tRNA ribosyltransferase-isomerase from Prochlorococcus marinus (strain MIT 9515).